Here is a 321-residue protein sequence, read N- to C-terminus: Glucokinase (321 aa).

ATP is bound at residue 8–13 (GDVGGT).

The protein belongs to the bacterial glucokinase family.

The protein localises to the cytoplasm. The catalysed reaction is D-glucose + ATP = D-glucose 6-phosphate + ADP + H(+). The polypeptide is Glucokinase (Klebsiella pneumoniae (strain 342)).